Consider the following 427-residue polypeptide: 3-phosphoshikimate 1-carboxyvinyltransferase (427 aa).

3-phosphoshikimate is bound by residues Lys-22, Ser-23, and Arg-27. Lys-22 lines the phosphoenolpyruvate pocket. Residues Gly-96 and Arg-124 each contribute to the phosphoenolpyruvate site. The 3-phosphoshikimate site is built by Ser-169, Ser-170, Gln-171, Ser-197, Asp-313, Asn-336, and Lys-340. Phosphoenolpyruvate is bound at residue Gln-171. The active-site Proton acceptor is Asp-313. The phosphoenolpyruvate site is built by Arg-344, Arg-386, and Lys-411.

It belongs to the EPSP synthase family. Monomer.

It is found in the cytoplasm. The enzyme catalyses 3-phosphoshikimate + phosphoenolpyruvate = 5-O-(1-carboxyvinyl)-3-phosphoshikimate + phosphate. The protein operates within metabolic intermediate biosynthesis; chorismate biosynthesis; chorismate from D-erythrose 4-phosphate and phosphoenolpyruvate: step 6/7. In terms of biological role, catalyzes the transfer of the enolpyruvyl moiety of phosphoenolpyruvate (PEP) to the 5-hydroxyl of shikimate-3-phosphate (S3P) to produce enolpyruvyl shikimate-3-phosphate and inorganic phosphate. This chain is 3-phosphoshikimate 1-carboxyvinyltransferase, found in Salmonella heidelberg (strain SL476).